Reading from the N-terminus, the 195-residue chain is Orotate phosphoribosyltransferase (195 aa).

117-125 (EDITTTGGS) contributes to the 5-phospho-alpha-D-ribose 1-diphosphate binding site. Residues Thr121 and Arg149 each coordinate orotate.

This sequence belongs to the purine/pyrimidine phosphoribosyltransferase family. PyrE subfamily. Homodimer. Mg(2+) is required as a cofactor.

It carries out the reaction orotidine 5'-phosphate + diphosphate = orotate + 5-phospho-alpha-D-ribose 1-diphosphate. Its pathway is pyrimidine metabolism; UMP biosynthesis via de novo pathway; UMP from orotate: step 1/2. In terms of biological role, catalyzes the transfer of a ribosyl phosphate group from 5-phosphoribose 1-diphosphate to orotate, leading to the formation of orotidine monophosphate (OMP). The polypeptide is Orotate phosphoribosyltransferase (Acidithiobacillus ferrooxidans (strain ATCC 53993 / BNL-5-31) (Leptospirillum ferrooxidans (ATCC 53993))).